Reading from the N-terminus, the 332-residue chain is DNA-directed RNA polymerase subunit alpha (332 aa).

Residues 1–232 (MKGYLKDFLK…DQLSVFVDLE (232 aa)) form an alpha N-terminal domain (alpha-NTD) region. The alpha C-terminal domain (alpha-CTD) stretch occupies residues 247–332 (IDPVLLRPID…SLGDRARIAG (86 aa)).

It belongs to the RNA polymerase alpha chain family. As to quaternary structure, homodimer. The RNAP catalytic core consists of 2 alpha, 1 beta, 1 beta' and 1 omega subunit. When a sigma factor is associated with the core the holoenzyme is formed, which can initiate transcription.

The enzyme catalyses RNA(n) + a ribonucleoside 5'-triphosphate = RNA(n+1) + diphosphate. Its function is as follows. DNA-dependent RNA polymerase catalyzes the transcription of DNA into RNA using the four ribonucleoside triphosphates as substrates. This is DNA-directed RNA polymerase subunit alpha from Halorhodospira halophila (strain DSM 244 / SL1) (Ectothiorhodospira halophila (strain DSM 244 / SL1)).